The primary structure comprises 413 residues: Peptide chain release factor 1, mitochondrial (413 aa).

Gln-287 is subject to N5-methylglutamine. The interval 335 to 363 (RLEKEEKERKARKSQVSSTNRSDKIRTYN) is disordered.

It belongs to the prokaryotic/mitochondrial release factor family. Post-translationally, methylation of glutamine in the GGQ triplet is conserved from bacteria to mammals. N5-methylated on Gln-287 by MTQ1.

It is found in the mitochondrion. Its function is as follows. Mitochondrial peptide chain release factor that directs the termination of translation in response to the peptide chain termination codons UAA and UAG. In Saccharomyces cerevisiae (strain ATCC 204508 / S288c) (Baker's yeast), this protein is Peptide chain release factor 1, mitochondrial (MRF1).